A 325-amino-acid polypeptide reads, in one-letter code: Lipid droplet-associated hydrolase (325 aa).

Catalysis depends on serine 139, which acts as the Nucleophile. Active-site charge relay system residues include aspartate 271 and histidine 300.

It belongs to the AB hydrolase superfamily. LDAH family.

The protein resides in the lipid droplet. It localises to the endoplasmic reticulum. The catalysed reaction is a cholesterol ester + H2O = cholesterol + a fatty acid + H(+). Its function is as follows. Probable serine lipid hydrolase associated with lipid droplets. Has low cholesterol esterase activity. Appears to lack triglyceride lipase activity. Involved in cholesterol and triglyceride homeostasis; stimulates cellular triglyceride accumulation and cellular cholesterol release. Acts antagonistically with PNPLA2/ATGL in regulation of cellular lipid stores. May regulate triglyceride accumulation indirectly through stimulation of PNPLA2/ATGL ubiquitination and proteasomal degradation. Promotes microtubule-dependent lipid droplet fusion. Highly expressed in macrophage-rich areas in atherosclerotic lesions, suggesting that it could promote cholesterol ester turnover in macrophages. This Pongo abelii (Sumatran orangutan) protein is Lipid droplet-associated hydrolase.